A 324-amino-acid chain; its full sequence is NADH-cytochrome b5 reductase 2 (324 aa).

A helical transmembrane segment spans residues 31–47 (IPLIGGITLAAGAGYYY). The region spanning 70 to 178 (QGWIGLKLAH…KGPLPKYPWE (109 aa)) is the FAD-binding FR-type domain. 181–216 (KHDHICLIAGGTGITPMYQLVRKIFSNPEDKTKVTL) lines the FAD pocket.

It belongs to the flavoprotein pyridine nucleotide cytochrome reductase family. The cofactor is FAD.

Its subcellular location is the mitochondrion outer membrane. The enzyme catalyses 2 Fe(III)-[cytochrome b5] + NADH = 2 Fe(II)-[cytochrome b5] + NAD(+) + H(+). Functionally, may mediate the reduction of outer membrane cytochrome b5. This chain is NADH-cytochrome b5 reductase 2 (MCR1), found in Ajellomyces capsulatus (strain NAm1 / WU24) (Darling's disease fungus).